The following is a 160-amino-acid chain: Globin-like protein (160 aa).

The Globin domain maps to 2–152; that stretch reads SMTRQEIQDL…FNAECQVHLK (151 aa). Residue H101 participates in heme binding.

Belongs to the globin family.

It is found in the cytoplasm. Functionally, may be a globin and may play a role in oxygen transport. The sequence is that of Globin-like protein (glb-1) from Caenorhabditis briggsae.